The chain runs to 394 residues: Phosphatidylinositol 4-phosphate 5-kinase-like protein 1 (394 aa).

A PIPK domain is found at 36–393 (DKQSRLGLFE…RLCQWVEAHT (358 aa)).

Heterodimerizes with other type I phosphatidylinositol 4-phosphate 5-kinase.

Its subcellular location is the cytoplasm. The protein localises to the membrane. The catalysed reaction is a 1,2-diacyl-sn-glycero-3-phospho-(1D-myo-inositol 4-phosphate) + ATP = a 1,2-diacyl-sn-glycero-3-phospho-(1D-myo-inositol-4,5-bisphosphate) + ADP + H(+). May act as a scaffold to localize and regulate type I PI(4)P 5-kinases to specific compartments within the cell, where they generate PI(4,5)P2 for actin nucleation, signaling and scaffold protein recruitment and conversion to PI(3,4,5)P3. The sequence is that of Phosphatidylinositol 4-phosphate 5-kinase-like protein 1 (PIP5KL1) from Homo sapiens (Human).